The primary structure comprises 773 residues: uncharacterized protein (773 aa).

A disordered region spans residues 192 to 219; sequence EASGTNNNPKEIEMNSDTTSSVPKSGST.

The protein resides in the cytoplasm. This is an uncharacterized protein from Schizosaccharomyces pombe (strain 972 / ATCC 24843) (Fission yeast).